The sequence spans 362 residues: MSKSNSIFPVLFCAAGIYASFLTWALVQEPLTTQVWENSHKRFQCPNVIAVVQAVAAVCVGYFYMRAKGAQRNYGAIAMVRDYAKPLALISFTQSASSPLSQYALQYVDYLTYMLAKSCKMIPVLLVHLIIYRTTISRKKSVVAVLVSIGVTIFTIGGSKGKISGSISGSNDEHFFQKASGFLLLFLSLFMDGLTNATQDKMLKNNRVQMAIQNAETQDKKQQHKVFHTLTGAHMMFALNFFVAIWNIAYLLVIDRGQICNAHAMLKKDPIIVSYLLAYALCGSLGQCFIFYTLELYGSLVLIMITVTRKMMSMLLSIIVFGKTVNATQWLGIVIVFSGITWEALDKRREKKALEAKVQKSE.

A run of 5 helical transmembrane segments spans residues 7-27, 45-65, 111-131, 141-161, and 175-195; these read IFPV…WALV, CPNV…YFYM, LTYM…HLII, SVVA…GSKG, and FFQK…DGLT. N196 carries an N-linked (GlcNAc...) asparagine glycan. A run of 4 helical transmembrane segments spans residues 234 to 254, 271 to 291, 296 to 316, and 317 to 337; these read HMMF…LLVI, IIVS…CFIF, LYGS…SMLL, and SIIV…VIVF.

The protein belongs to the nucleotide-sugar transporter family. SLC35B subfamily.

The protein resides in the endoplasmic reticulum membrane. In terms of biological role, may be involved in specific transport of UDP-Gal from the cytosol to the Golgi lumen. Involved in the maintenance of optimal conditions for the folding of secretory pathway proteins in the endoplasmic reticulum. The polypeptide is UDP-galactose transporter homolog 1 (HUT1) (Candida glabrata (strain ATCC 2001 / BCRC 20586 / JCM 3761 / NBRC 0622 / NRRL Y-65 / CBS 138) (Yeast)).